Here is a 317-residue protein sequence, read N- to C-terminus: uncharacterized protein (317 aa).

7 consecutive transmembrane segments (helical) span residues 24-44, 63-83, 136-156, 187-207, 229-249, 252-272, and 295-315; these read ISII…TGIM, LSIS…SILA, LGVA…ISED, LIPI…IGFF, ILAL…GGFL, GILS…LTFS, and IVMV…AGLL.

To M.jannaschii MJ0880, MJ1556 and MJ1589.

It localises to the cell membrane. This is an uncharacterized protein from Methanocaldococcus jannaschii (strain ATCC 43067 / DSM 2661 / JAL-1 / JCM 10045 / NBRC 100440) (Methanococcus jannaschii).